A 499-amino-acid chain; its full sequence is Signal recognition particle subunit SRP54 2 (499 aa).

The tract at residues 1-295 is G-domain; it reads MVLAELGGSI…DVKPFVSRLL (295 aa). GTP is bound by residues 108–115, 190–194, and 248–251; these read GLQGSGKT, DTSGR, and TKMD. Residues 296 to 499 form an M-domain region; the sequence is GMGDWSGFMD…MGGMFGGGDK (204 aa).

Belongs to the GTP-binding SRP family. SRP54 subfamily. As to quaternary structure, component of a signal recognition particle (SRP) complex that consists of a 7SL RNA molecule of 300 nucleotides and six protein subunits: SRP72, SRP68, SRP54, SRP19, SRP14 and SRP9.

It localises to the cytoplasm. The protein localises to the endoplasmic reticulum. It catalyses the reaction GTP + H2O = GDP + phosphate + H(+). Functionally, component of the signal recognition particle (SRP) complex, a ribonucleoprotein complex that mediates the cotranslational targeting of secretory and membrane proteins to the endoplasmic reticulum (ER). As part of the SRP complex, associates with the SRP receptor (SR) component SRPRA to target secretory proteins to the endoplasmic reticulum membrane. Binds to the signal sequence of presecretory proteins when they emerge from the ribosomes. Displays basal GTPase activity, and stimulates reciprocal GTPase activation of the SR subunit SRPRA. Forms a guanosine 5'-triphosphate (GTP)-dependent complex with the SR subunit SRPRA. SR compaction and GTPase mediated rearrangement of SR drive SRP-mediated cotranslational protein translocation into the ER. Requires the presence of SRP9/SRP14 and/or SRP19 to stably interact with RNA. This chain is Signal recognition particle subunit SRP54 2, found in Solanum lycopersicum (Tomato).